Here is a 95-residue protein sequence, read N- to C-terminus: Corticostatin-3 (95 aa).

An N-terminal signal peptide occupies residues 1–19; sequence MRTLALLAAILLVALQAQA. A propeptide spanning residues 20-62 is cleaved from the precursor; sequence EHVSVSIDEVVDQQPPQAEDQDVAIYVKEHESSALEALGVKAG. Cystine bridges form between cysteine 65-cysteine 93, cysteine 67-cysteine 82, and cysteine 72-cysteine 92.

This sequence belongs to the alpha-defensin family.

Its subcellular location is the secreted. This peptide has antibiotic, anti-fungi and antiviral activity. It also inhibits corticotropin (ACTH) stimulated corticosterone production. The chain is Corticostatin-3 from Oryctolagus cuniculus (Rabbit).